A 230-amino-acid polypeptide reads, in one-letter code: Ribonuclease 3 (230 aa).

Positions 8–135 (IVELKEKLGI…LIGAVYLQTN (128 aa)) constitute an RNase III domain. Residue Glu48 coordinates Mg(2+). Asp52 is an active-site residue. 2 residues coordinate Mg(2+): Asp121 and Glu124. Residue Glu124 is part of the active site. Residues 161–230 (DYKTMIQELV…AHFAFQKLSK (70 aa)) enclose the DRBM domain.

It belongs to the ribonuclease III family. As to quaternary structure, homodimer. Mg(2+) is required as a cofactor.

It is found in the cytoplasm. The catalysed reaction is Endonucleolytic cleavage to 5'-phosphomonoester.. Digests double-stranded RNA. Involved in the processing of primary rRNA transcript to yield the immediate precursors to the large and small rRNAs (23S and 16S). Processes some mRNAs, and tRNAs when they are encoded in the rRNA operon. Processes pre-crRNA and tracrRNA of type II CRISPR loci if present in the organism. In Natranaerobius thermophilus (strain ATCC BAA-1301 / DSM 18059 / JW/NM-WN-LF), this protein is Ribonuclease 3.